The chain runs to 103 residues: Protein reprimo A (103 aa).

The chain crosses the membrane as a helical span at residues 50–70; sequence IVQIAVMCVLSLTVVFGIFFL.

Belongs to the reprimo family.

The protein resides in the cytoplasm. Its subcellular location is the membrane. May be involved in the regulation of p53-dependent G2 arrest of the cell cycle. The chain is Protein reprimo A from Danio rerio (Zebrafish).